The sequence spans 672 residues: DNA ligase (672 aa).

NAD(+) is bound by residues 37 to 41 (DAEYD), 86 to 87 (SL), and Glu115. The active-site N6-AMP-lysine intermediate is Lys117. The NAD(+) site is built by Arg138, Glu172, Lys288, and Lys312. Residues Cys406, Cys409, Cys424, and Cys429 each contribute to the Zn(2+) site. Residues 590–672 (DISSTFAGKT…LQEIQQSKQV (83 aa)) enclose the BRCT domain.

It belongs to the NAD-dependent DNA ligase family. LigA subfamily. Mg(2+) serves as cofactor. It depends on Mn(2+) as a cofactor.

The enzyme catalyses NAD(+) + (deoxyribonucleotide)n-3'-hydroxyl + 5'-phospho-(deoxyribonucleotide)m = (deoxyribonucleotide)n+m + AMP + beta-nicotinamide D-nucleotide.. DNA ligase that catalyzes the formation of phosphodiester linkages between 5'-phosphoryl and 3'-hydroxyl groups in double-stranded DNA using NAD as a coenzyme and as the energy source for the reaction. It is essential for DNA replication and repair of damaged DNA. This is DNA ligase from Anoxybacillus flavithermus (strain DSM 21510 / WK1).